The following is a 426-amino-acid chain: Serine hydroxymethyltransferase (426 aa).

(6S)-5,6,7,8-tetrahydrofolate is bound by residues leucine 122 and 126–128 (GHL). N6-(pyridoxal phosphate)lysine is present on lysine 231. Residues glutamate 247 and 355–357 (SPF) contribute to the (6S)-5,6,7,8-tetrahydrofolate site.

It belongs to the SHMT family. As to quaternary structure, homodimer. Requires pyridoxal 5'-phosphate as cofactor.

It localises to the cytoplasm. The catalysed reaction is (6R)-5,10-methylene-5,6,7,8-tetrahydrofolate + glycine + H2O = (6S)-5,6,7,8-tetrahydrofolate + L-serine. The protein operates within one-carbon metabolism; tetrahydrofolate interconversion. It functions in the pathway amino-acid biosynthesis; glycine biosynthesis; glycine from L-serine: step 1/1. In terms of biological role, catalyzes the reversible interconversion of serine and glycine with tetrahydrofolate (THF) serving as the one-carbon carrier. This reaction serves as the major source of one-carbon groups required for the biosynthesis of purines, thymidylate, methionine, and other important biomolecules. Also exhibits THF-independent aldolase activity toward beta-hydroxyamino acids, producing glycine and aldehydes, via a retro-aldol mechanism. This is Serine hydroxymethyltransferase from Cyanothece sp. (strain PCC 7425 / ATCC 29141).